Consider the following 607-residue polypeptide: Ceramide kinase (607 aa).

The 224-residue stretch at 135 to 358 (DRPKSLMVFV…LDIAQVVRWK (224 aa)) folds into the DAGKc domain. Residues 145–149 (HPLCG), Thr176, and 205–211 (GDGLFNE) each bind ATP. Residue 204 to 207 (GGDG) coordinates substrate. The active-site Proton donor/acceptor is Asp206. The segment at 247 to 297 (NDLSNSELTGDDANAISGSSNTPDDHEPLLSTTRSTGLDISSSDSSDEPCN) is disordered. Positions 276–286 (LSTTRSTGLDI) are enriched in polar residues. Ser320 provides a ligand contact to ATP. The short motif at 454 to 461 (CRTNCLIC) is the CXXXCXXC element.

It depends on Ca(2+) as a cofactor. Mg(2+) serves as cofactor. As to expression, highly expressed in leaves and at lower levels in stems.

It carries out the reaction an N-acylsphing-4-enine + ATP = an N-acylsphing-4-enine 1-phosphate + ADP + H(+). In terms of biological role, catalyzes specifically the phosphorylation of ceramide to form ceramide 1-phosphate. Possesses activity on ceramide analog (C6 synthetic ceramide) in vitro. Ceramide is a critical sphingolipid metabolite that induces programmed cell death (PCD) in plants and ceramide-1-phosphate has a PCD suppressive effect. Thus, ceramide phosphorylation plays a role in the modulation of PCD and CERK activity is crucial for the maintenance of cell viability. The polypeptide is Ceramide kinase (CERK) (Oryza sativa subsp. japonica (Rice)).